Consider the following 179-residue polypeptide: Avenin-like a2 (179 aa).

The N-terminal stretch at 1 to 19 (MKTMFLLALLAFTATSAVA) is a signal peptide.

The protein belongs to the prolamin family. Contains 7 disulfide bonds.

Its function is as follows. Seed storage protein. Not integrated in the gluten polymer through disulfide bonds, unless incorporated by reduction and reoxidation during dough making. Increases dough strength and bread volume, but decreases dough stability when added into a base wheat flour. The sequence is that of Avenin-like a2 from Triticum aestivum (Wheat).